Here is a 258-residue protein sequence, read N- to C-terminus: Acyl-[acyl-carrier-protein]--UDP-N-acetylglucosamine O-acyltransferase (258 aa).

Belongs to the transferase hexapeptide repeat family. LpxA subfamily. In terms of assembly, homotrimer.

It localises to the cytoplasm. The enzyme catalyses a (3R)-hydroxyacyl-[ACP] + UDP-N-acetyl-alpha-D-glucosamine = a UDP-3-O-[(3R)-3-hydroxyacyl]-N-acetyl-alpha-D-glucosamine + holo-[ACP]. It participates in glycolipid biosynthesis; lipid IV(A) biosynthesis; lipid IV(A) from (3R)-3-hydroxytetradecanoyl-[acyl-carrier-protein] and UDP-N-acetyl-alpha-D-glucosamine: step 1/6. Involved in the biosynthesis of lipid A, a phosphorylated glycolipid that anchors the lipopolysaccharide to the outer membrane of the cell. In Saccharophagus degradans (strain 2-40 / ATCC 43961 / DSM 17024), this protein is Acyl-[acyl-carrier-protein]--UDP-N-acetylglucosamine O-acyltransferase.